Consider the following 265-residue polypeptide: Small ribosomal subunit protein uS2 (265 aa).

Belongs to the universal ribosomal protein uS2 family.

In Ligilactobacillus salivarius (strain UCC118) (Lactobacillus salivarius), this protein is Small ribosomal subunit protein uS2.